We begin with the raw amino-acid sequence, 674 residues long: MRTIFNAKIGDAAYIQDELSSSLSSSVASKFKEFSKRKRISDSFSDLSEELERIGLRQMRKRIKLEKSFERTPKKKVQTKKHLPPVRKKDSVKRRRIIIASPSDEEHDGKVQTNDDSSENKTEKPKNQSNCSSNASKLSEAAQLLNVSEEKSSISETELERSRQVALNELNKSERFNKTETQLDISVMEVDSSDHDEEEKTEKVGAKNNRSLYEIVDSDDEEEQDQDQSDAAKPAESENHSEIKKSTSFMDQMSGAKGNKSVYEIMDSYETEDPKEAGKNEESDKDKPAENGKSDKDKQAETEMSDEDKPSEIKSPSTIKKSIISTADEEALLAELASSDLSHLEKMFNPLQKSRRQSLHVPSPELAAKNPKLRRRSERVEVGNDFCPSQSFVDMVAEKKRQKNKRKRLSKSLSGAPEDLEEMEIKHERKRLKSSHGASTDSMEEDNENETMTVAEEHHSDGEVSNGEVPIEEKPTTSSEKPSASELPEEGNSAPPALKKDVKRLQAARQAVSHAVNLLAPPKATEAEPRTLSRKLSPQPPVVDKKSAKQKKKGKKKQKPQEASPLKSSDEENHGHRIRTNAGYVTVVDEPPTKVPIIELIKTSSGMVRVEPCTPKQKYFRELPPTPKMHGFREEPGPSGMSRKRAKHAAPKVEHNSAKQAALRFKEQIFARRS.

Disordered regions lie at residues 65–137, 168–321, and 352–382; these read LEKS…NASK, NELN…TIKK, and QKSR…RVEV. Residues 73–97 are compositionally biased toward basic residues; it reads PKKKVQTKKHLPPVRKKDSVKRRRI. The segment covering 127–137 has biased composition (polar residues); sequence NQSNCSSNASK. Residues 216–228 show a composition bias toward acidic residues; that stretch reads VDSDDEEEQDQDQ. Residues 233 to 245 are compositionally biased toward basic and acidic residues; sequence KPAESENHSEIKK. Phosphoserine is present on Ser-248. A compositionally biased stretch (basic and acidic residues) spans 272-312; the sequence is EDPKEAGKNEESDKDKPAENGKSDKDKQAETEMSDEDKPSE. Phosphoserine occurs at positions 358 and 391. Disordered stretches follow at residues 395–585 and 618–659; these read MVAE…AGYV and KYFR…NSAK. Over residues 400–410 the composition is skewed to basic residues; that stretch reads KRQKNKRKRLS. Phosphoserine is present on Ser-414. Basic residues predominate over residues 548 to 558; the sequence is AKQKKKGKKKQ.

The protein is Slender lobes-like protein of Drosophila melanogaster (Fruit fly).